Here is a 134-residue protein sequence, read N- to C-terminus: Phosphoribosyl-AMP cyclohydrolase (134 aa).

Aspartate 80 serves as a coordination point for Mg(2+). A Zn(2+)-binding site is contributed by cysteine 81. The Mg(2+) site is built by aspartate 82 and aspartate 84. Cysteine 98 and cysteine 105 together coordinate Zn(2+).

Belongs to the PRA-CH family. Homodimer. It depends on Mg(2+) as a cofactor. Zn(2+) is required as a cofactor.

Its subcellular location is the cytoplasm. The catalysed reaction is 1-(5-phospho-beta-D-ribosyl)-5'-AMP + H2O = 1-(5-phospho-beta-D-ribosyl)-5-[(5-phospho-beta-D-ribosylamino)methylideneamino]imidazole-4-carboxamide. It participates in amino-acid biosynthesis; L-histidine biosynthesis; L-histidine from 5-phospho-alpha-D-ribose 1-diphosphate: step 3/9. Catalyzes the hydrolysis of the adenine ring of phosphoribosyl-AMP. This is Phosphoribosyl-AMP cyclohydrolase from Bordetella pertussis (strain Tohama I / ATCC BAA-589 / NCTC 13251).